The sequence spans 245 residues: Uridylate kinase (245 aa).

K18–G21 contributes to the ATP binding site. G60 provides a ligand contact to UMP. The ATP site is built by G61 and R65. Residues D80 and T141 to T148 contribute to the UMP site. ATP-binding residues include T168, Y174, and D177.

It belongs to the UMP kinase family. As to quaternary structure, homohexamer.

It is found in the cytoplasm. It carries out the reaction UMP + ATP = UDP + ADP. Its pathway is pyrimidine metabolism; CTP biosynthesis via de novo pathway; UDP from UMP (UMPK route): step 1/1. With respect to regulation, inhibited by UTP. In terms of biological role, catalyzes the reversible phosphorylation of UMP to UDP. This Pseudomonas paraeruginosa (strain DSM 24068 / PA7) (Pseudomonas aeruginosa (strain PA7)) protein is Uridylate kinase.